Consider the following 102-residue polypeptide: Small ribosomal subunit protein uS10 (102 aa).

It belongs to the universal ribosomal protein uS10 family. In terms of assembly, part of the 30S ribosomal subunit.

In terms of biological role, involved in the binding of tRNA to the ribosomes. The protein is Small ribosomal subunit protein uS10 of Oceanobacillus iheyensis (strain DSM 14371 / CIP 107618 / JCM 11309 / KCTC 3954 / HTE831).